The sequence spans 255 residues: Arginine-binding extracellular protein ArtP (255 aa).

Residues methionine 1–alanine 19 form the signal peptide. Cysteine 20 carries the N-palmitoyl cysteine lipid modification. Cysteine 20 carries S-diacylglycerol cysteine lipidation.

The protein belongs to the bacterial solute-binding protein 3 family.

The protein resides in the cell membrane. Its function is as follows. Part of a binding-protein-dependent transport system for arginine. In Bacillus subtilis (strain 168), this protein is Arginine-binding extracellular protein ArtP (artP).